A 96-amino-acid polypeptide reads, in one-letter code: Small ribosomal subunit protein uS19 (96 aa).

This sequence belongs to the universal ribosomal protein uS19 family.

Functionally, protein S19 forms a complex with S13 that binds strongly to the 16S ribosomal RNA. The sequence is that of Small ribosomal subunit protein uS19 from Solibacter usitatus (strain Ellin6076).